Consider the following 434-residue polypeptide: Septin-6 (434 aa).

Ala-2 bears the N-acetylalanine mark. Position 27 is a phosphoserine (Ser-27). One can recognise a Septin-type G domain in the interval 39–305 (QGFCFNILCV…ELYRRCKLEE (267 aa)). The G1 motif stretch occupies residues 49-56 (GETGLGKS). Residues 49–56 (GETGLGKS), Gly-104, 185–193 (KSDAISKSE), Gly-239, and Arg-254 contribute to the GTP site. Residues 101 to 104 (STVG) are G3 motif. A G4 motif region spans residues 184 to 187 (AKSD). Residues 321-407 (QETYEAKRNE…QRKAAAELLQ (87 aa)) adopt a coiled-coil conformation. Lys-367 carries the N6-acetyllysine modification. Residues 403-434 (AELLQSQGSQAGGSQTLKRDKEKKNNPWLCIE) are disordered. Residues 407–417 (QSQGSQAGGSQ) show a composition bias toward low complexity. Ser-416 is modified (phosphoserine). Thr-418 carries the phosphothreonine modification.

Belongs to the TRAFAC class TrmE-Era-EngA-EngB-Septin-like GTPase superfamily. Septin GTPase family. In terms of assembly, septins polymerize into heterooligomeric protein complexes that form filaments, and associate with cellular membranes, actin filaments and microtubules. GTPase activity is required for filament formation. Filaments are assembled from asymmetrical heterotrimers, composed of SEPTIN2, SEPTIN6 and SEPTIN7 that associate head-to-head to form a hexameric unit. Within the trimer, directly interacts with SEPTIN2 and SEPTIN7. Also interacts with SEPTIN9 and SEPTIN12. Interaction with SEPTIN12 alters filament structure. Component of a septin core octameric complex consisting of SEPTIN12, SEPTIN7, SEPTIN6 and SEPTIN2 or SEPTIN4 in the order 12-7-6-2-2-6-7-12 or 12-7-6-4-4-6-7-12 and located in the sperm annulus. Interacts with SOCS7. Interacts with HNRNPA1. Expressed in the cerebral cortex (at protein level). Associated with synaptic vesicles in various brain regions, including glomeruli of the olfactory bulb (at protein level).

The protein localises to the cytoplasm. Its subcellular location is the cytoskeleton. The protein resides in the spindle. It is found in the chromosome. It localises to the centromere. The protein localises to the kinetochore. Its subcellular location is the cleavage furrow. The protein resides in the midbody. It is found in the cell projection. It localises to the cilium. The protein localises to the flagellum. Functionally, filament-forming cytoskeletal GTPase. Required for normal organization of the actin cytoskeleton. Involved in cytokinesis. Forms a filamentous structure with SEPTIN12, SEPTIN6, SEPTIN2 and probably SEPTIN4 at the sperm annulus which is required for the structural integrity and motility of the sperm tail during postmeiotic differentiation. The sequence is that of Septin-6 from Mus musculus (Mouse).